The primary structure comprises 477 residues: Proton-coupled amino acid transporter 3 (477 aa).

Over 1 to 54 (MGNVPLLREVGKCQRNMFGRSTASSKGSSNSRSSSSTSPKKGPRREADALMFIQ) the chain is Cytoplasmic. A compositionally biased stretch (low complexity) spans 19 to 40 (GRSTASSKGSSNSRSSSSTSPK). Residues 19 to 43 (GRSTASSKGSSNSRSSSSTSPKKGP) are disordered. A helical membrane pass occupies residues 55–75 (IFIHLLKSNIGTGFLGLPLAV). The Extracellular portion of the chain corresponds to 76-77 (KN). A helical membrane pass occupies residues 78–98 (AGLLVGPVSLLAIGALTVHCM). The Cytoplasmic segment spans residues 99 to 144 (DILLNCACHLTQRLQRSFVNYEETTMYSLETCPSPWLRTHSVWGRY). Residues 145 to 165 (VVSFLLIVTQLGFCSVYFMFL) form a helical membrane-spanning segment. Residues 166 to 202 (ADNLQQIMEEAHFTSNVCQPRQSLVMTSILDTRFYML) lie on the Extracellular side of the membrane. The chain crosses the membrane as a helical span at residues 203 to 223 (TILPFLILLVLIQNPQVLSIF). Over 224 to 225 (ST) the chain is Cytoplasmic. Residues 226–246 (LATITTLSSLALIFEYLIQTP) form a helical membrane-spanning segment. Over 247–259 (HHSNLPLVANWKT) the chain is Extracellular. A helical membrane pass occupies residues 260–280 (FLLFFGTAIFTFEGVGMVLPL). The Cytoplasmic portion of the chain corresponds to 281–291 (KSQMKSPQQFP). The chain crosses the membrane as a helical span at residues 292–312 (AVLYLGMSFVIFLYICLGTLG). The Extracellular portion of the chain corresponds to 313–344 (YMKFGTDTQASITLNLPICWLYQSVKLMYSVG). Residues 345 to 365 (IFFTYALQFHVPAEIIVPYVV) traverse the membrane as a helical segment. The Cytoplasmic segment spans residues 366 to 374 (SRVSENWAL). The chain crosses the membrane as a helical span at residues 375–395 (FVDLTVRTALVCLTCFSAVLI). The Extracellular portion of the chain corresponds to 396 to 399 (PRLD). Residues 400–420 (LVISLVGSVSSSALAIIIPPL) traverse the membrane as a helical segment. At 421–432 (LEIATFYSENIS) the chain is on the cytoplasmic side. A helical membrane pass occupies residues 433-453 (CATIVKDIMISILGLLGCVLG). The Extracellular segment spans residues 454–477 (TYQALYEMTQQTHFYMANSTRVHI).

This sequence belongs to the amino acid/polyamine transporter 2 family. In terms of tissue distribution, specifically expressed in testis.

It is found in the membrane. This chain is Proton-coupled amino acid transporter 3 (Slc36a3), found in Mus musculus (Mouse).